A 118-amino-acid polypeptide reads, in one-letter code: Large ribosomal subunit protein bL19 (118 aa).

Belongs to the bacterial ribosomal protein bL19 family.

Functionally, this protein is located at the 30S-50S ribosomal subunit interface and may play a role in the structure and function of the aminoacyl-tRNA binding site. This is Large ribosomal subunit protein bL19 from Parafrankia sp. (strain EAN1pec).